A 143-amino-acid polypeptide reads, in one-letter code: Large ribosomal subunit protein uL13 (143 aa).

This sequence belongs to the universal ribosomal protein uL13 family. Part of the 50S ribosomal subunit.

Its function is as follows. This protein is one of the early assembly proteins of the 50S ribosomal subunit, although it is not seen to bind rRNA by itself. It is important during the early stages of 50S assembly. This is Large ribosomal subunit protein uL13 from Dehalococcoides mccartyi (strain CBDB1).